A 122-amino-acid polypeptide reads, in one-letter code: Large ribosomal subunit protein uL18 (122 aa).

It belongs to the universal ribosomal protein uL18 family. In terms of assembly, part of the 50S ribosomal subunit; part of the 5S rRNA/L5/L18/L25 subcomplex. Contacts the 5S and 23S rRNAs.

This is one of the proteins that bind and probably mediate the attachment of the 5S RNA into the large ribosomal subunit, where it forms part of the central protuberance. This chain is Large ribosomal subunit protein uL18, found in Synechococcus sp. (strain JA-2-3B'a(2-13)) (Cyanobacteria bacterium Yellowstone B-Prime).